The sequence spans 466 residues: 5-hydroxytryptamine receptor (466 aa).

The segment at 1–21 (MNASRLPGFNDTSQDQPYPTS) is disordered. Residues 1–66 (MNASRLPGFN…TSFVLMAVTS (66 aa)) are Extracellular-facing. Asparagine 2, asparagine 10, asparagine 29, asparagine 41, asparagine 45, and asparagine 50 each carry an N-linked (GlcNAc...) asparagine glycan. The span at 10–21 (NDTSQDQPYPTS) shows a compositional bias: polar residues. A helical transmembrane segment spans residues 67-89 (VVLALIILATIVGNVFVIAAIII). The Cytoplasmic segment spans residues 90 to 99 (ERNLQNVANY). A helical transmembrane segment spans residues 100 to 121 (LVASLAVADLMVACLVMPLGAV). Residues 122–136 (YEVSQGWILGPELCD) are Extracellular-facing. Residues cysteine 135 and cysteine 215 are joined by a disulfide bond. A helical membrane pass occupies residues 137–158 (MWTSSDVLCSSASILHLVAIAT). At 159 to 177 (DRYWAVTDVDYIHIRNEKR) the chain is on the cytoplasmic side. Residues 178-200 (IFTMIVLVWGAALVVSLAPQLGW) traverse the membrane as a helical segment. Over 201-228 (KDPDYLARITQQQKCLVSQDLAYQIFAT) the chain is Extracellular. A helical membrane pass occupies residues 229–250 (MSTFYVPLAVILILYWKIFQTA). Topologically, residues 251 to 386 (RRRIRRRRDP…AKRERKAAKT (136 aa)) are cytoplasmic. Disordered regions lie at residues 255–282 (RRRR…QSAR) and 339–360 (VPPS…KPER). Low complexity predominate over residues 339–353 (VPPSVSPEKSSSTVT). The chain crosses the membrane as a helical span at residues 387 to 410 (LAIITGAFVFCWLPFFIMALVMPI). Residues 411–419 (CQTCVISDY) are Extracellular-facing. The chain crosses the membrane as a helical span at residues 420–442 (LASFFLWLGYFNSTLNPVIYTIF). At 443–466 (SPDFRQAFARILFGTHRRRRYKKF) the chain is on the cytoplasmic side.

This sequence belongs to the G-protein coupled receptor 1 family.

It is found in the cell membrane. Functionally, this is a receptor for 5-hydroxytryptamine (serotonin), a biogenic hormone that function as a neurotransmitter, a hormone, and a mitogen. The polypeptide is 5-hydroxytryptamine receptor (Heliothis virescens (Tobacco budworm moth)).